The following is a 428-amino-acid chain: Lupus La protein homolog A (428 aa).

Residues 7–99 (KEQKLDSDTK…RRSPAKPLPE (93 aa)) form the HTH La-type RNA-binding domain. Residues 111-203 (KSVYIKGFPT…EERKLNKSEE (93 aa)) enclose the RRM domain. Disordered regions lie at residues 187–223 (EYHA…DAER) and 323–428 (QESF…VGDQ). Short sequence motifs (nuclear localization signal) lie at residues 196 to 212 (RKLN…QVKK) and 316 to 332 (KKIL…RKGR). Residues 227–349 (EERVGSLLKF…KGRGGKGNDS (123 aa)) form the xRRM domain. Basic residues-rich tracts occupy residues 328-343 (KRKG…KGRG) and 352-361 (RKRTQFQGKK). Acidic residues predominate over residues 366-377 (SSDDEDDMEESE). The segment covering 406 to 428 (RSLDDKAEDGPAVKQSKTEVGDQ) has biased composition (basic and acidic residues).

In terms of processing, phosphorylated.

It is found in the nucleus. In terms of biological role, la protein plays a role in the transcription of RNA polymerase III. It is most probably a transcription termination factor. Binds to the 3' termini of virtually all nascent polymerase III transcripts. The protein is Lupus La protein homolog A (ssb-a) of Xenopus laevis (African clawed frog).